The following is a 96-amino-acid chain: uncharacterized protein (96 aa).

The protein resides in the mitochondrion. This is an uncharacterized protein from Schizosaccharomyces pombe (strain 972 / ATCC 24843) (Fission yeast).